The sequence spans 109 residues: MKLKKKFLEKSKNIANERIDILMNFAQKELRCEKKERSKNYVLLSKKIAMRMRMPFPKEWRRRICKNCGSFLIYGKNSSVRIKSKNYSHVVITCLECKHIFRIPIKKSK.

Positions 65, 68, 94, and 97 each coordinate Zn(2+).

This sequence belongs to the eukaryotic/archaeal RNase P protein component 4 family. In terms of assembly, consists of a catalytic RNA component and at least 4-5 protein subunits. Zn(2+) serves as cofactor.

The protein localises to the cytoplasm. It carries out the reaction Endonucleolytic cleavage of RNA, removing 5'-extranucleotides from tRNA precursor.. Functionally, part of ribonuclease P, a protein complex that generates mature tRNA molecules by cleaving their 5'-ends. This chain is Ribonuclease P protein component 4, found in Methanococcus vannielii (strain ATCC 35089 / DSM 1224 / JCM 13029 / OCM 148 / SB).